The chain runs to 658 residues: Threonine--tRNA ligase (658 aa).

Residues 1–63 (MDQITITFPD…DDNASIDFVA (63 aa)) enclose the TGS domain. The segment at 245 to 548 (DHRKLGRELD…LIEHYAGNFP (304 aa)) is catalytic. The Zn(2+) site is built by C341, H392, and H525.

This sequence belongs to the class-II aminoacyl-tRNA synthetase family. In terms of assembly, homodimer. Zn(2+) is required as a cofactor.

Its subcellular location is the cytoplasm. The enzyme catalyses tRNA(Thr) + L-threonine + ATP = L-threonyl-tRNA(Thr) + AMP + diphosphate + H(+). Its function is as follows. Catalyzes the attachment of threonine to tRNA(Thr) in a two-step reaction: L-threonine is first activated by ATP to form Thr-AMP and then transferred to the acceptor end of tRNA(Thr). Also edits incorrectly charged L-seryl-tRNA(Thr). This chain is Threonine--tRNA ligase, found in Rhodopseudomonas palustris (strain ATCC BAA-98 / CGA009).